The chain runs to 21 residues: Agglutinin beta-1 chain (21 aa).

Polar residues predominate over residues 1 to 10 (NGPNGKSQSI). Residues 1–21 (NGPNGKSQSIIVGPWGDRVTN) are disordered.

Belongs to the jacalin lectin family. Formed of four alpha chains and four beta chains.

In terms of biological role, D-galactose-specific lectin, binds the T-antigen structure Gal-beta1,3-GalNAc. The polypeptide is Agglutinin beta-1 chain (Maclura pomifera (Osage orange)).